Consider the following 274-residue polypeptide: Protein STAY-GREEN, chloroplastic (274 aa).

The N-terminal 48 residues, 1–48, are a transit peptide targeting the chloroplast; the sequence is MAAATSTMSLLPPITQQQRWHAADSLVVLASRCHNSRRRRRCRYVVPR.

Belongs to the staygreen family. In terms of assembly, interacts with LHCII complex. Expressed in leaves, roots and developing seeds.

Its subcellular location is the plastid. The protein localises to the chloroplast membrane. It localises to the chloroplast stroma. Its function is as follows. Involved in the disassembling mechanism of the intact light-harvesting complex of photosystem II (LHCII) in the thylakoid membranes. Required to trigger chlorophyll degradation during natural and dark-induced leaf senescence. The sequence is that of Protein STAY-GREEN, chloroplastic (SGR) from Oryza sativa subsp. japonica (Rice).